Reading from the N-terminus, the 661-residue chain is Pentatricopeptide repeat-containing protein At3g04750, mitochondrial (661 aa).

The N-terminal 18 residues, Met-1 to Cys-18, are a transit peptide targeting the mitochondrion. PPR repeat units follow at residues Asn-99 to Pro-131, Asp-132 to Ser-163, Gly-165 to Pro-195, Asp-196 to Pro-230, Asp-231 to Tyr-265, Asn-268 to Lys-298, Asp-299 to Ser-333, Trp-334 to Pro-366, Asp-367 to Gly-401, Asp-402 to Lys-432, Asp-433 to Pro-467, Asn-468 to Lys-498, and Glu-504 to Ser-539. The interval Met-540–Val-615 is type E motif. Residues Glu-616–Lys-647 are type E(+) motif.

The protein belongs to the PPR family. PCMP-E subfamily.

It is found in the mitochondrion. This Arabidopsis thaliana (Mouse-ear cress) protein is Pentatricopeptide repeat-containing protein At3g04750, mitochondrial (PCMP-E81).